A 356-amino-acid polypeptide reads, in one-letter code: N-methyltransferase 4 (356 aa).

Residues 93 to 94, 128 to 136, and 155 to 160 each bind S-adenosyl-L-methionine; these read QS, ILDIGCGFG, and TNSAEQ.

Belongs to the CFA/CMAS family. In terms of tissue distribution, expressed in stems, roots, flower buds and leaves.

Probable N-methyltransferase not involved in benzylisoquinoline metabolism. Shows no detectable activity with (s)-coclaurine, (R)- or (S)-reticuline, papaverine or (R,S)-tetrahydropapaverine. The sequence is that of N-methyltransferase 4 (NMT4) from Papaver somniferum (Opium poppy).